The following is a 486-amino-acid chain: tRNA sulfurtransferase (486 aa).

The region spanning 60 to 166 is the THUMP domain; it reads QKICAMLINI…DNQLFIIIKR (107 aa). Residues 184–185, Lys-266, Gly-288, and Gln-297 each bind ATP; that span reads LI. Cysteines 345 and 458 form a disulfide. Positions 406-484 constitute a Rhodanese domain; the sequence is LDSTDVVLDI…GFSNVKIYRP (79 aa). The Cysteine persulfide intermediate role is filled by Cys-458.

This sequence belongs to the ThiI family.

It is found in the cytoplasm. It carries out the reaction [ThiI sulfur-carrier protein]-S-sulfanyl-L-cysteine + a uridine in tRNA + 2 reduced [2Fe-2S]-[ferredoxin] + ATP + H(+) = [ThiI sulfur-carrier protein]-L-cysteine + a 4-thiouridine in tRNA + 2 oxidized [2Fe-2S]-[ferredoxin] + AMP + diphosphate. The catalysed reaction is [ThiS sulfur-carrier protein]-C-terminal Gly-Gly-AMP + S-sulfanyl-L-cysteinyl-[cysteine desulfurase] + AH2 = [ThiS sulfur-carrier protein]-C-terminal-Gly-aminoethanethioate + L-cysteinyl-[cysteine desulfurase] + A + AMP + 2 H(+). It functions in the pathway cofactor biosynthesis; thiamine diphosphate biosynthesis. Catalyzes the ATP-dependent transfer of a sulfur to tRNA to produce 4-thiouridine in position 8 of tRNAs, which functions as a near-UV photosensor. Also catalyzes the transfer of sulfur to the sulfur carrier protein ThiS, forming ThiS-thiocarboxylate. This is a step in the synthesis of thiazole, in the thiamine biosynthesis pathway. The sulfur is donated as persulfide by IscS. This Blochmanniella pennsylvanica (strain BPEN) protein is tRNA sulfurtransferase.